A 178-amino-acid chain; its full sequence is High mobility group B protein 1 (178 aa).

Basic and acidic residues-rich tracts occupy residues 1-52 (MKTA…DPNK) and 101-118 (APYE…EKQM). Disordered regions lie at residues 1–59 (MKTA…APSA) and 75–178 (NPNV…EEED). A DNA-binding region (HMG box) is located at residues 53–122 (PKRAPSAFFV…EYEKQMDAYN (70 aa)). 2 positions are modified to phosphoserine: Ser-137 and Ser-146. Residues 140–178 (NDEDEASGEEELLEKEAAGDDEEEEEEEDDDDDDDEEED) are compositionally biased toward acidic residues.

Belongs to the HMGB family. As to expression, expressed in cotyledons, roots, stems, leaves and flowers (excluding pedicels).

It is found in the nucleus. In terms of biological role, binds preferentially double-stranded DNA. Modulates general plant growth and stress tolerance. Confers sensitivity to salt and genotoxic (methyl methanesulfonate, MMS) stresses. The sequence is that of High mobility group B protein 1 (HMGB1) from Arabidopsis thaliana (Mouse-ear cress).